Here is a 254-residue protein sequence, read N- to C-terminus: Proline-rich protein 23A3 (254 aa).

3 disordered regions span residues 1 to 50 (MLRT…LEAP), 161 to 196 (ASPP…GAEQ), and 212 to 254 (PFPG…LVYE). The span at 35 to 50 (EPACPEPLAQPELEAP) shows a compositional bias: low complexity. The span at 214–241 (PGSPLQPLPPSPSRNPQEQLPPCPPCSP) shows a compositional bias: pro residues. Residues 243 to 254 (APRRARKRLVYE) are compositionally biased toward basic residues.

It belongs to the PRR23 family.

This chain is Proline-rich protein 23A3, found in Mus musculus (Mouse).